The sequence spans 231 residues: Large ribosomal subunit protein uL1 (231 aa).

Belongs to the universal ribosomal protein uL1 family. Part of the 50S ribosomal subunit.

Its function is as follows. Binds directly to 23S rRNA. The L1 stalk is quite mobile in the ribosome, and is involved in E site tRNA release. Protein L1 is also a translational repressor protein, it controls the translation of the L11 operon by binding to its mRNA. This is Large ribosomal subunit protein uL1 from Thiobacillus denitrificans (strain ATCC 25259 / T1).